A 59-amino-acid chain; its full sequence is Large ribosomal subunit protein bL32 (59 aa).

Positions 1 to 19 are enriched in basic residues; it reads MAQPKKKTSKSRRNMRRSH. The disordered stretch occupies residues 1 to 20; that stretch reads MAQPKKKTSKSRRNMRRSHD.

Belongs to the bacterial ribosomal protein bL32 family.

In Maridesulfovibrio salexigens (strain ATCC 14822 / DSM 2638 / NCIMB 8403 / VKM B-1763) (Desulfovibrio salexigens), this protein is Large ribosomal subunit protein bL32.